The primary structure comprises 47 residues: Conotoxin Cal6.18 (47 aa).

The first 19 residues, 1–19, serve as a signal peptide directing secretion; it reads MKLTYVLIVAMLVLVVCRA.

This sequence belongs to the conotoxin O1 superfamily. May contain 3 disulfide bonds. As to expression, expressed by the venom duct.

It is found in the secreted. Functionally, probable neurotoxin. The polypeptide is Conotoxin Cal6.18 (Californiconus californicus (California cone)).